Consider the following 481-residue polypeptide: GTPase Der (481 aa).

EngA-type G domains lie at 3-166 and 194-367; these read PVVA…ESDF and IKLA…MSAT. Residues 9 to 16, 56 to 60, 118 to 121, 200 to 207, 247 to 251, and 312 to 315 each bind GTP; these read GRPNVGKS, DTGGI, NKVD, GKPNVGKS, DTAGV, and NKWD. The KH-like domain occupies 368–452; the sequence is KRINTALLTQ…PIKIEFREGN (85 aa).

Belongs to the TRAFAC class TrmE-Era-EngA-EngB-Septin-like GTPase superfamily. EngA (Der) GTPase family. Associates with the 50S ribosomal subunit.

Its function is as follows. GTPase that plays an essential role in the late steps of ribosome biogenesis. The protein is GTPase Der of Alteromonas mediterranea (strain DSM 17117 / CIP 110805 / LMG 28347 / Deep ecotype).